Consider the following 232-residue polypeptide: Putative N-acetylmannosamine-6-phosphate 2-epimerase (232 aa).

Belongs to the NanE family.

It catalyses the reaction an N-acyl-D-glucosamine 6-phosphate = an N-acyl-D-mannosamine 6-phosphate. It participates in amino-sugar metabolism; N-acetylneuraminate degradation; D-fructose 6-phosphate from N-acetylneuraminate: step 3/5. Its function is as follows. Converts N-acetylmannosamine-6-phosphate (ManNAc-6-P) to N-acetylglucosamine-6-phosphate (GlcNAc-6-P). The sequence is that of Putative N-acetylmannosamine-6-phosphate 2-epimerase from Borreliella burgdorferi (strain ZS7) (Borrelia burgdorferi).